A 609-amino-acid chain; its full sequence is Zinc metalloproteinase/disintegrin-like HR1a (609 aa).

The signal sequence occupies residues 1 to 20 (MIQVLLVTICLAVFPYQGSS). Positions 21–190 (IILGSGNVND…KKASKLVVTA (170 aa)) are excised as a propeptide. A Peptidase M12B domain is found at 200–396 (RFIELVIVAD…DEPQCILNEP (197 aa)). 2 residues coordinate Ca(2+): Glu203 and Asp287. N-linked (GlcNAc...) asparagine glycosylation occurs at Asn298. 3 disulfide bridges follow: Cys311–Cys391, Cys351–Cys375, and Cys353–Cys358. His336 is a Zn(2+) binding site. Residue Glu337 is part of the active site. Positions 340 and 346 each coordinate Zn(2+). N-linked (GlcNAc...) asparagine glycosylation is present at Asn350. Residue Asn374 is glycosylated (N-linked (GlcNAc...) asparagine). Residues Cys391 and Asn394 each coordinate Ca(2+). The propeptide occupies 397–400 (LRTD). The Disintegrin domain maps to 404 to 490 (PPVCGNELLE…DCPTDRFHRN (87 aa)). Val406, Asn409, Leu411, Glu413, Glu416, and Asp419 together coordinate Ca(2+). Cystine bridges form between Cys407–Cys426, Cys407–Cys436, Cys418–Cys431, Cys418–Cys436, Cys420–Cys426, Cys430–Cys453, Cys444–Cys450, Cys449–Cys475, Cys462–Cys482, Cys469–Cys494, Cys469–Cys501, Cys494–Cys506, Cys501–Cys506, Cys513–Cys528, Cys513–Cys563, Cys528–Cys571, Cys541–Cys551, Cys551–Cys558, Cys558–Cys597, Cys563–Cys571, Cys591–Cys602, and Cys597–Cys602. The D/ECD-tripeptide motif lies at 468–470 (ECD). Residues Asp470, Glu473, and Asp485 each coordinate Ca(2+). An N-linked (GlcNAc...) asparagine glycan is attached at Asn520.

This sequence belongs to the venom metalloproteinase (M12B) family. P-III subfamily. P-IIIb sub-subfamily. As to quaternary structure, monomer. The cofactor is Zn(2+). In terms of tissue distribution, expressed by the venom gland.

The protein resides in the secreted. Its function is as follows. Zinc protease that induces hemorrhage and has proteolytic activity. Has preference for Ala, His, Pro, Met, and Tyr at the P1 position, in descending order (in vitro). Predominantly prefers Val and Asp at the P3 and P2 positions, respectively. Inhibits platelet aggregation induced by ADP, thrombin, platelet-activating factor and collagen. Acts by inhibiting fibrinogen interaction with platelet receptors alpha-IIb/beta-3 (ITGA2B/ITGB3). This is Zinc metalloproteinase/disintegrin-like HR1a from Protobothrops flavoviridis (Habu).